We begin with the raw amino-acid sequence, 214 residues long: ATP phosphoribosyltransferase (214 aa).

This sequence belongs to the ATP phosphoribosyltransferase family. Short subfamily. In terms of assembly, heteromultimer composed of HisG and HisZ subunits.

It localises to the cytoplasm. It carries out the reaction 1-(5-phospho-beta-D-ribosyl)-ATP + diphosphate = 5-phospho-alpha-D-ribose 1-diphosphate + ATP. It functions in the pathway amino-acid biosynthesis; L-histidine biosynthesis; L-histidine from 5-phospho-alpha-D-ribose 1-diphosphate: step 1/9. In terms of biological role, catalyzes the condensation of ATP and 5-phosphoribose 1-diphosphate to form N'-(5'-phosphoribosyl)-ATP (PR-ATP). Has a crucial role in the pathway because the rate of histidine biosynthesis seems to be controlled primarily by regulation of HisG enzymatic activity. This is ATP phosphoribosyltransferase (hisG) from Nostoc sp. (strain PCC 7120 / SAG 25.82 / UTEX 2576).